The sequence spans 251 residues: MKKAGLLFLVMIVIAVVAAGIGYWKLTGEESDTLRKIVLEECLPNQQQNQNPSPCAEVKPNAGYVVLKDLNGPLQYLLMPTYRINGTESPLLTDPSTPNFFWLAWQARDFMSKKYGQPVPDRAVSLAINSRTGRTQNHFHIHISCIRPDVREQLDNNLANISSRWLPLPGGLRGHEYLARRVTESELVQRSPFMMLAEEVPEAREHMGSYGLAMVRQSDNSFVLLATQRNLLTLNRASAEEIQDHQCEILR.

The helical transmembrane segment at 4–24 (AGLLFLVMIVIAVVAAGIGYW) threads the bilayer.

It belongs to the Cdh family.

The protein localises to the cell inner membrane. It carries out the reaction a CDP-1,2-diacyl-sn-glycerol + H2O = a 1,2-diacyl-sn-glycero-3-phosphate + CMP + 2 H(+). It participates in phospholipid metabolism; CDP-diacylglycerol degradation; phosphatidate from CDP-diacylglycerol: step 1/1. This is CDP-diacylglycerol pyrophosphatase from Shigella boydii serotype 4 (strain Sb227).